The chain runs to 196 residues: Probable splicing factor, arginine/serine-rich 4 (196 aa).

Residues 19–97 form the RRM domain; sequence TSLKIDNLSY…RELRVTLAKY (79 aa). Residues 91-106 show a composition bias toward basic and acidic residues; sequence RVTLAKYDRPSDERGG. Residues 91–196 are disordered; that stretch reads RVTLAKYDRP…SPSRSRSNSR (106 aa). Residues 112–141 are compositionally biased toward basic residues; that stretch reads GRRRSRSPRRRSRSPRYSRSRSPRRSRSRT. Composition is skewed to basic and acidic residues over residues 145–160 and 167–176; these read PSRDRRDSPDRRDNSR and PPREDGSPKE. The segment covering 184 to 196 has biased composition (low complexity); it reads ASRSPSRSRSNSR.

This sequence belongs to the splicing factor SR family. Post-translationally, extensively phosphorylated on serine residues in the RS domain.

It localises to the nucleus. In terms of biological role, may play a functionally redundant role in embryogenesis. The chain is Probable splicing factor, arginine/serine-rich 4 (rsp-4) from Caenorhabditis elegans.